Here is a 582-residue protein sequence, read N- to C-terminus: Potassium-transporting ATPase potassium-binding subunit (582 aa).

Transmembrane regions (helical) follow at residues 11–31, 81–101, 148–168, 195–215, 272–292, 298–318, 379–399, 401–421, 439–459, and 551–571; these read AVFFTILAVLVFVAGEYLAWV, LKAVLVFNVCIWVLLFVVLMF, FGIGIAMFLTPATGLALMPAF, LLPISLLIAIILMAEGSVQTI, VLTLAMPIGTFSAIYAWGAWV, GVAIVAAFFVIYMALTGVAVV, ALGAFSLLFAFATNNISNGVG, GLLNILMFVILTAFIGALMIG, VFVVILVLPILVLIPQAAAVV, and GLLIGVIIIVSALVFLPALVF.

It belongs to the KdpA family. In terms of assembly, the system is composed of three essential subunits: KdpA, KdpB and KdpC.

The protein resides in the cell membrane. In terms of biological role, part of the high-affinity ATP-driven potassium transport (or Kdp) system, which catalyzes the hydrolysis of ATP coupled with the electrogenic transport of potassium into the cytoplasm. This subunit binds the extracellular potassium ions and delivers the ions to the membrane domain of KdpB through an intramembrane tunnel. The polypeptide is Potassium-transporting ATPase potassium-binding subunit (Halobacterium salinarum (strain ATCC 700922 / JCM 11081 / NRC-1) (Halobacterium halobium)).